Here is a 284-residue protein sequence, read N- to C-terminus: Tropomyosin Per a 7.0102 (284 aa).

The stretch at 1-266 (MDAIKKKMQA…EDELVHEKEK (266 aa)) forms a coiled coil.

Belongs to the tropomyosin family. As to quaternary structure, homodimer. Expressed in striated skeletal muscle (at protein level).

Functionally, tropomyosin, in association with the troponin complex, plays a central role in the calcium dependent regulation of muscle contraction. This chain is Tropomyosin Per a 7.0102, found in Periplaneta americana (American cockroach).